The chain runs to 252 residues: Carbonic anhydrase (252 aa).

An N-terminal signal peptide occupies residues 1–26 (MPRFPRTLPRLTAVLLLACTAFSAAA). The Alpha-carbonic anhydrase domain maps to 31 to 252 (THWGYTGHDS…QPLNARVVIE (222 aa)). A disulfide bridge links Cys54 with Cys207. Residue His92 is the Proton acceptor of the active site. His118, His120, and His137 together coordinate Zn(2+). 203–204 (TT) contacts substrate.

This sequence belongs to the alpha-carbonic anhydrase family. In terms of assembly, homodimer. Zn(2+) is required as a cofactor.

The protein resides in the periplasm. The enzyme catalyses hydrogencarbonate + H(+) = CO2 + H2O. In terms of biological role, reversible hydration of carbon dioxide. The protein is Carbonic anhydrase (cah) of Neisseria gonorrhoeae.